Here is a 955-residue protein sequence, read N- to C-terminus: uncharacterized protein (955 aa).

Positions 1-24 (MQSSLIKILGVLAIVATLVCFVFA) are cleaved as a signal peptide. A disordered region spans residues 127 to 146 (STRPGKSNLDDNGKMIPIPR). Helical transmembrane passes span 597–617 (IKAL…LGFA), 707–727 (LGLS…IVII), 739–759 (AFMA…FLLF), 781–801 (VVLM…LDFV), 818–838 (FIGT…INWF), and 857–877 (IVAL…SGNM). The segment at 905–955 (LSQVGMDEKTRKGITGRAKERLKQRNETLKQAEKTRKNAPKEEPPKAEIPK) is disordered. Positions 910 to 955 (MDEKTRKGITGRAKERLKQRNETLKQAEKTRKNAPKEEPPKAEIPK) are enriched in basic and acidic residues.

It belongs to the TrbL/VirB6 family.

Its subcellular location is the cell membrane. This is an uncharacterized protein from Rickettsia bellii (strain RML369-C).